The sequence spans 740 residues: Arf-GAP with coiled-coil, ANK repeat and PH domain-containing protein 1 (740 aa).

Positions 1 to 226 constitute a BAR domain; the sequence is MTVKLDFEEC…RKELGTQLHN (226 aa). The interval 1-382 is required for formation of endosomal tubules when overexpressed with PIP5K1C; it reads MTVKLDFEEC…RGPGQVSGYH (382 aa). The PH domain occupies 265-360; the sequence is GLVMEGHLFK…WVSAVQSSIA (96 aa). The Arf-GAP domain occupies 405 to 527; that stretch reads GQVAAQVQSV…KFLTKLPEIR (123 aa). The tract at residues 405-740 is required for interaction with GULP1; the sequence is GQVAAQVQSV…SRRSHDLHTL (336 aa). A C4-type zinc finger spans residues 420–443; it reads CCDCREPAPEWASINLGVTLCIQC. Tyr485 is modified (3'-nitrotyrosine). The interval 525–562 is disordered; that stretch reads EIRGRRGGRGPPRGHPPVPPKPPIRPHSGIVRSKSECP. A prevents interaction with ITGB1 when S-554 is not phosphorylated region spans residues 525-566; the sequence is EIRGRRGGRGPPRGHPPVPPKPPIRPHSGIVRSKSECPSDDM. Residues 537–549 are compositionally biased toward pro residues; the sequence is RGHPPVPPKPPIR. ANK repeat units follow at residues 606-635, 639-668, and 672-702; these read GNAT…NVNQ, AGRG…DLGA, and EGRD…EAEA.

As to quaternary structure, banana-shaped homodimer laterally assembling into tetramers, the tetramers further pack helically onto the membrane. Interacts with GTP-bound ARF6. Interacts with third cytoplasmic loop of SLC2A4/GLUT4. Interacts with CLTC. Interacts with GULP1. Forms a complex with GDP-bound ARF6 and GULP1. Interacts with ITGB1; required for ITGB1 recycling.

The protein localises to the recycling endosome membrane. Its activity is regulated as follows. GAP activity stimulated by phosphatidylinositol 4,5-bisphosphate (PIP2) and phosphatidic acid. Its function is as follows. GTPase-activating protein (GAP) for ADP ribosylation factor 6 (ARF6) required for clathrin-dependent export of proteins from recycling endosomes to trans-Golgi network and cell surface. Required for regulated export of ITGB1 from recycling endosomes to the cell surface and ITGB1-dependent cell migration. This chain is Arf-GAP with coiled-coil, ANK repeat and PH domain-containing protein 1 (Acap1), found in Mus musculus (Mouse).